Consider the following 291-residue polypeptide: Secreted effector protein PipB (291 aa).

Pentapeptide repeat domains follow at residues 154 to 193 and 199 to 238; these read LNLR…NLVG and ANLH…ILFG.

Its subcellular location is the secreted. The protein localises to the host membrane. In terms of biological role, effector proteins function to alter host cell physiology and promote bacterial survival in host tissues. Does not appear to be required for the formation or the maintenance of either Salmonella-containing vacuole (SCV) or the Salmonella-induced filaments (Sifs). Not required for intracellular replication in phagocytic cells. In Salmonella typhimurium (strain LT2 / SGSC1412 / ATCC 700720), this protein is Secreted effector protein PipB (pipB).